The primary structure comprises 458 residues: COBRA-like protein 2 (458 aa).

Residues 1–29 form the signal peptide; sequence MARFLLGAAAIALLAGVSSLLLMVPFAEA. N-linked (GlcNAc...) asparagine glycans are attached at residues Asn-38, Asn-163, Asn-171, Asn-211, Asn-236, Asn-318, Asn-333, and Asn-352. The helical transmembrane segment at 430–450 threads the bilayer; that stretch reads VFLLMSFLVCGTLAFLHNHLV.

Belongs to the COBRA family.

Its subcellular location is the membrane. The chain is COBRA-like protein 2 (BC1L2) from Oryza sativa subsp. japonica (Rice).